Consider the following 170-residue polypeptide: MMGDNEGRRTPLLNLGVQVSMRVLIIGAAMASMWVMITNREVASVYGIAFEAKYSYSSAFRYLVYAQIAVCAATLFTLVWACLAVRRRGLVFALFFFDLLTTLTAISAFSAAFAEGYVGKYGNKQAGWLPICGYVHVYCSRVTISLAMSFASFVLLFILTVLTASSARHY.

At 1–16 (MMGDNEGRRTPLLNLG) the chain is on the cytoplasmic side. A helical transmembrane segment spans residues 17–37 (VQVSMRVLIIGAAMASMWVMI). Residues 38-62 (TNREVASVYGIAFEAKYSYSSAFRY) are Extracellular-facing. The helical transmembrane segment at 63–83 (LVYAQIAVCAATLFTLVWACL) threads the bilayer. Over 84–88 (AVRRR) the chain is Cytoplasmic. The chain crosses the membrane as a helical span at residues 89-109 (GLVFALFFFDLLTTLTAISAF). The Extracellular segment spans residues 110 to 141 (SAAFAEGYVGKYGNKQAGWLPICGYVHVYCSR). A helical membrane pass occupies residues 142–162 (VTISLAMSFASFVLLFILTVL). Over 163 to 170 (TASSARHY) the chain is Cytoplasmic.

This sequence belongs to the Casparian strip membrane proteins (CASP) family. In terms of assembly, homodimer and heterodimers.

It is found in the cell membrane. The protein is CASP-like protein 1F1 of Arabidopsis lyrata subsp. lyrata (Lyre-leaved rock-cress).